A 296-amino-acid chain; its full sequence is Maltose/maltodextrin transport system permease protein MalG (296 aa).

Residues 1–12 (MAMVQPKSQKAR) are Cytoplasmic-facing. The chain crosses the membrane as a helical span at residues 13–35 (LFITHLLLLLFIAAIMFPLLMVV). Residues 36-88 (AISLRQGNFATGSLIPEQISWDHWKLALGFSVEQADGRITPPPFPVLLWLWNS) lie on the Periplasmic side of the membrane. The region spanning 85-281 (LWNSVKVAGI…LPITIVFLLA (197 aa)) is the ABC transmembrane type-1 domain. A helical membrane pass occupies residues 89–111 (VKVAGISAIGIVALSTTCAYAFA). The Cytoplasmic portion of the chain corresponds to 112 to 123 (RMRFPGKATLLK). Residues 124–143 (GMLIFQMFPAVLSLVALYAL) form a helical membrane-spanning segment. Residues 144-152 (FDRLGEYIP) lie on the Periplasmic side of the membrane. Residues 153 to 175 (FIGLNTHGGVIFAYLGGIALHVW) form a helical membrane-spanning segment. The Cytoplasmic portion of the chain corresponds to 176-204 (TIKGYFETIDSSLEEAAALDGATPWQAFR). A helical transmembrane segment spans residues 205–227 (LVLLPLSVPILAVVFILSFIAAI). The Periplasmic segment spans residues 228–257 (TEVPVASLLLRDVNSYTLAVGMQQYLNPQN). A helical transmembrane segment spans residues 258 to 280 (YLWGDFAAAAVMSALPITIVFLL). The Cytoplasmic portion of the chain corresponds to 281–296 (AQRWLVNGLTAGGVKG).

The protein belongs to the binding-protein-dependent transport system permease family. MalFG subfamily. The complex is composed of two ATP-binding proteins (MalK), two transmembrane proteins (MalG and MalF) and a solute-binding protein (MalE).

The protein localises to the cell inner membrane. Functionally, part of the ABC transporter complex MalEFGK involved in maltose/maltodextrin import. Probably responsible for the translocation of the substrate across the membrane. The polypeptide is Maltose/maltodextrin transport system permease protein MalG (malG) (Escherichia coli O157:H7).